The following is a 1072-amino-acid chain: Netrin receptor unc-5 (1072 aa).

The first 30 residues, 1–30 (MAVINKAGNVIALLLVKLQLILLFTLSVSG), serve as a signal peptide directing secretion. Over 31–440 (ELPQLDYGSL…SSEAEEAGDL (410 aa)) the chain is Extracellular. The tract at residues 77 to 100 (LGNSSEDENVRPQQGSSSSGLGSS) is disordered. Asparagine 79 carries N-linked (GlcNAc...) asparagine glycosylation. The 97-residue stretch at 128-224 (PIFLIEPESV…RGVVKSQAAT (97 aa)) folds into the Ig-like domain. Intrachain disulfides connect cysteine 149–cysteine 207, cysteine 253–cysteine 303, cysteine 336–cysteine 375, cysteine 338–cysteine 378, and cysteine 352–cysteine 364. Positions 232 to 314 (KSFNQSPTSL…AENIAGRRVS (83 aa)) constitute an Ig-like C2-type domain. N-linked (GlcNAc...) asparagine glycosylation is present at asparagine 300. TSP type-1 domains follow at residues 324 to 379 (NGGW…AACP) and 398 to 499 (MARW…EQCQ). The chain crosses the membrane as a helical span at residues 441-461 (LLGAPGVGMAALIAAAGVGAV). At 462-1072 (GSPSEATGSS…IVETIGPLWI (611 aa)) the chain is on the cytoplasmic side. Residues 654-802 (SSTYEMLGSA…LGHFTVVAEP (149 aa)) form the ZU5 domain. In terms of domain architecture, Death spans 980–1067 (LICGALDPPR…DVLDIIVETI (88 aa)).

The protein belongs to the unc-5 family. Phosphorylated on different cytoplasmic tyrosine residues. As to expression, prior to gastrulation, it is strongly expressed in the presumptive mesoderm. Mesodermal expression begins to fade during stages 13-14, persisting only in the cells that form the dorsal vessel. Expressed within the CNS from late stage 13, shortly after the first axons have extended. Detected in several dispersed clusters of cells within the CNS, increasing in number as development proceeds. Also expressed in the peripheral and exit glia, which migrate laterally out of the CNS between stages 14 and 17. Strongly expressed in motor axons that exit the CNS ipsilaterally via the segmental nerve root (SN). Not expressed on either commissural or longitudinal axons within the CNS, nor on motor axons that exit via the intersegmental nerve (ISN). In the periphery, it is detected on all branches of the SN. Also expressed at high level in exit and peripheral glia along both the SN and ISN.

It is found in the membrane. Its function is as follows. Receptor for netrin required for motor axon guidance. Mediates both short- and long-range axon motor repulsion in the developing nervous system upon ligand binding. Also involved in glial migration. While short-range repulsion requires both fra and unc-5, long-range repulsion only requires unc-5. The sequence is that of Netrin receptor unc-5 (unc-5) from Drosophila melanogaster (Fruit fly).